We begin with the raw amino-acid sequence, 274 residues long: Diaminopimelate epimerase (274 aa).

3 residues coordinate substrate: Asn-13, Gln-45, and Asn-63. Cys-72 serves as the catalytic Proton donor. Residues 73-74 (GN), Asn-158, Asn-191, and 209-210 (ER) contribute to the substrate site. Cys-218 functions as the Proton acceptor in the catalytic mechanism. Substrate is bound at residue 219 to 220 (GT).

This sequence belongs to the diaminopimelate epimerase family. In terms of assembly, homodimer.

It localises to the cytoplasm. The enzyme catalyses (2S,6S)-2,6-diaminopimelate = meso-2,6-diaminopimelate. It participates in amino-acid biosynthesis; L-lysine biosynthesis via DAP pathway; DL-2,6-diaminopimelate from LL-2,6-diaminopimelate: step 1/1. Catalyzes the stereoinversion of LL-2,6-diaminopimelate (L,L-DAP) to meso-diaminopimelate (meso-DAP), a precursor of L-lysine and an essential component of the bacterial peptidoglycan. The chain is Diaminopimelate epimerase from Pelagibacter ubique (strain HTCC1062).